A 126-amino-acid chain; its full sequence is UPF0102 protein Mlg_2205 (126 aa).

The protein belongs to the UPF0102 family.

This chain is UPF0102 protein Mlg_2205, found in Alkalilimnicola ehrlichii (strain ATCC BAA-1101 / DSM 17681 / MLHE-1).